The primary structure comprises 904 residues: Protein translocase subunit SecA (904 aa).

ATP is bound by residues Q89, 107 to 111 (GEGKT), and D502. Positions 886, 888, 897, and 898 each coordinate Zn(2+).

The protein belongs to the SecA family. In terms of assembly, monomer and homodimer. Part of the essential Sec protein translocation apparatus which comprises SecA, SecYEG and auxiliary proteins SecDF-YajC and YidC. Requires Zn(2+) as cofactor.

The protein resides in the cell inner membrane. Its subcellular location is the cytoplasm. It catalyses the reaction ATP + H2O + cellular proteinSide 1 = ADP + phosphate + cellular proteinSide 2.. Its function is as follows. Part of the Sec protein translocase complex. Interacts with the SecYEG preprotein conducting channel. Has a central role in coupling the hydrolysis of ATP to the transfer of proteins into and across the cell membrane, serving both as a receptor for the preprotein-SecB complex and as an ATP-driven molecular motor driving the stepwise translocation of polypeptide chains across the membrane. The sequence is that of Protein translocase subunit SecA from Rhizobium etli (strain CIAT 652).